The sequence spans 2769 residues: Teneurin-4 (2769 aa).

A compositionally biased stretch (basic and acidic residues) spans 1–22; sequence MDVKERKPYRSLTRRRDAERRY. A disordered region spans residues 1–45; the sequence is MDVKERKPYRSLTRRRDAERRYTSSSADSEEGKAPQKSYSSSETL. The 341-residue stretch at 1 to 341 folds into the Teneurin N-terminal domain; sequence MDVKERKPYR…KPSKYCNWKC (341 aa). Residues 1 to 345 are Cytoplasmic-facing; that stretch reads MDVKERKPYR…YCNWKCAALS (345 aa). Position 124 is a phosphoserine (Ser124). The disordered stretch occupies residues 130 to 233; the sequence is RLWGRSTRSG…PPAGGAQEPA (104 aa). Residues 134-155 show a composition bias toward low complexity; the sequence is RSTRSGRSSCLSSRANSNLTLT. Over residues 156 to 166 the composition is skewed to basic and acidic residues; that stretch reads DTEHENTETDH. Phosphothreonine is present on Thr178. Residues 187-211 show a composition bias toward polar residues; that stretch reads HTPNQHHAASINSLNRGNFTPRSNP. Residues 346-366 form a helical membrane-spanning segment; the sequence is AIVISATLVILLAYFVAMHLF. The Extracellular portion of the chain corresponds to 367–2769; that stretch reads GLNWHLQPME…FMRQSEMGRR (2403 aa). The segment at 400–426 is disordered; sequence PSGGTGLETPDRKGKGTTEGKPSSFFP. Residues 408-417 are compositionally biased toward basic and acidic residues; the sequence is TPDRKGKGTT. An N-linked (GlcNAc...) asparagine glycan is attached at Asn467. The disordered stretch occupies residues 507–526; it reads ARSLEGTPRQSRGTVPPSSH. Over residues 514–526 the composition is skewed to polar residues; that stretch reads PRQSRGTVPPSSH. EGF-like domains follow at residues 562-593, 594-624, 626-658, 659-690, 692-725, 726-757, 758-787, and 788-831; these read SVDNCPSNCYGNGDCISGTCHCFLGFLGPDCG, RASCPVLCSGNGQYMKGRCLCHSGWKGAECD, PTNQCIDVACSNHGTCITGTCICNPGYKGESCE, EVDCMDPTCSGRGVCVRGECHCSVGWGGTNCE, PRATCLDQCSGHGTFLPDTGLCSCDPSWTGHDCS, IEICAADCGGHGVCVGGTCRCEDGWMGAACDQ, RACHPRCAEHGTCRDGKCECSPGWNGEHCT, and IAHY…AGCD. 22 disulfide bridges follow: Cys566-Cys576, Cys570-Cys581, Cys583-Cys592, Cys601-Cys612, Cys614-Cys623, Cys630-Cys641, Cys635-Cys646, Cys648-Cys657, Cys662-Cys673, Cys667-Cys678, Cys680-Cys689, Cys700-Cys713, Cys715-Cys724, Cys729-Cys739, Cys733-Cys744, Cys746-Cys755, Cys760-Cys770, Cys764-Cys775, Cys777-Cys786, Cys800-Cys810, Cys804-Cys819, and Cys821-Cys830. 2 N-linked (GlcNAc...) asparagine glycosylation sites follow: Asn940 and Asn1259. NHL repeat units lie at residues 1216 to 1259, 1264 to 1308, 1334 to 1378, 1393 to 1444, and 1523 to 1566; these read SCPS…PSGN, LELR…IKST, TRCG…NGII, LSCD…VAGR, and CFSG…IRKN. The YD 1 repeat unit spans residues 1576–1595; the sequence is YELSSPIDQELYLFDTTGKH. An N-linked (GlcNAc...) asparagine glycan is attached at Asn1609. YD repeat units lie at residues 1612-1632, 1675-1694, and 1695-1717; these read YTGDGDITLITDNNGNMVNVR, YHGNSGLLATKSNENGWTTF, and YEYDSFGRLTNVTFPTGQVSSFR. Asn1705, Asn1741, Asn1799, and Asn1884 each carry an N-linked (GlcNAc...) asparagine glycan. 18 YD repeats span residues 1887–1906, 1928–1946, 1947–1967, 1974–1991, 1992–2013, 2014–2031, 2034–2054, 2057–2077, 2085–2104, 2110–2127, 2128–2154, 2156–2169, 2170–2193, 2196–2216, 2217–2237, 2239–2259, 2271–2291, and 2293–2313; these read YSPGGYIAGIQRGIMSERME, YLEKSMVLLLHSQRQYIFE, FDKNDRLSSVTMPNVARQTLE, YYRNIYQPPEGNASVIQD, FTEDGHLLHTFYLGTGRRVIYK, YGKLSKLAETLYDTTKVS, YDETAGMLKTINLQNEGFTCT, YRQIGPLIDRQIFRFTEEGMV, YDNSFRVTSMQAVINETPLP, YDDVSGKTEQFGKFGVIY, YDINQIITTAVMTHTKHFDAYGRMKEV, YEIFRSLMYWMTVQ, YDNMGRVVKKELKVGPYANTTRYS, YDADGQLQTVSINDKPLWRYS, YDLNGNLHLLSPGNSARLTPL, YDIRDRITRLGDVQYKMDEDG, YNSAGLLIKAYNRAGSWSVRY, and YDGLGRRVSSKSSHSHHLQFF. The N-linked (GlcNAc...) asparagine glycan is linked to Asn1985. An N-linked (GlcNAc...) asparagine glycan is attached at Asn2188. A glycan (N-linked (GlcNAc...) asparagine) is linked at Asn2328. Residues 2339–2380 form a YD 23 repeat; the sequence is YDLQGHLFAMELSSGDEFYIACDNIGTPLAVFSGTGLMIKQI. Asn2646 is a glycosylation site (N-linked (GlcNAc...) asparagine).

Belongs to the tenascin family. Teneurin subfamily. As to quaternary structure, homodimer; disulfide-linked. May also form heterodimer with either TENM1 or TENM2 or TENM3.

It is found in the cell membrane. The protein resides in the cell projection. Its subcellular location is the nucleus. It localises to the cytoplasm. Its function is as follows. Involved in neural development, regulating the establishment of proper connectivity within the nervous system. Plays a role in the establishment of the anterior-posterior axis during gastrulation. Regulates the differentiation and cellular process formation of oligodendrocytes and myelination of small-diameter axons in the central nervous system (CNS). Promotes activation of focal adhesion kinase. May function as a cellular signal transducer. In Homo sapiens (Human), this protein is Teneurin-4 (TENM4).